The following is a 298-amino-acid chain: DDRGK domain-containing protein 1 (298 aa).

Residues methionine 1–glutamate 2 are Lumenal-facing. Residues glutamate 3–tryptophan 23 traverse the membrane as a helical segment. Residues lysine 24 to serine 298 lie on the Cytoplasmic side of the membrane. Residues serine 31 to glutamate 155 are disordered. The span at lysine 101–glutamate 155 shows a compositional bias: basic and acidic residues.

Belongs to the DDRGK1 family.

The protein resides in the endoplasmic reticulum membrane. In terms of biological role, substrate adapter for ufmylation, the covalent attachment of the ubiquitin-like modifier UFM1 to substrate proteins. In Arabidopsis thaliana (Mouse-ear cress), this protein is DDRGK domain-containing protein 1.